Consider the following 934-residue polypeptide: Progesterone receptor (934 aa).

The tract at residues 1–49 (MTELKSKGPRAPHVAGGPPSPEVGSPLLCRPAAGPFQGSQTSDTLPEVS) is disordered. Residues 1–164 (MTELKSKGPR…PATQRVLSPL (164 aa)) form an AF3; mediates transcriptional activation region. A modulating, Pro-Rich region spans residues 1–567 (MTELKSKGPR…YSFESLPQKI (567 aa)). Residue serine 20 is modified to Phosphoserine. Residues 55–59 (LDGLL) carry the LXXL motif 1 motif. The tract at residues 61–239 (PRLCQGQDPP…EDSAGPLLKG (179 aa)) is disordered. Serine 81 carries the phosphoserine modification. Positions 115 to 119 (LDTLL) match the LXXL motif 2 motif. 2 positions are modified to phosphoserine: serine 130 and serine 162. Residues 165-305 (MSRSGGKTED…LATTMMDFIH (141 aa)) form a mediates transcriptional transrepression region. A Nuclear localization signal motif is present at residues 183–187 (KVLPR). Residue serine 190 is modified to Phosphoserine. Over residues 191–203 (PSRQLLLPTSGSP) the composition is skewed to polar residues. A Phosphoserine modification is found at serine 213. The segment covering 220–231 (EVEEEDGSESED) has biased composition (acidic residues). Residue serine 294 is modified to Phosphoserine; by MAPK1. Residues 331–375 (GGAGAASAFAPPQSSPSASSTPVAVGDFPDCAYPPDAEPKDNAYP) form a disordered region. The span at 335–350 (AASAFAPPQSSPSASS) shows a compositional bias: low complexity. Serine 345 carries the phosphoserine; by MAPK modification. Residue lysine 388 forms a Glycyl lysine isopeptide (Lys-Gly) (interchain with G-Cter in SUMO); alternate linkage. Lysine 388 is covalently cross-linked (Glycyl lysine isopeptide (Lys-Gly) (interchain with G-Cter in ubiquitin); alternate). A Phosphoserine; by CDK2 modification is found at serine 400. The disordered stretch occupies residues 415–454 (PDFPLGPPPQLPPRAPPSRPGEAAVTAAPASASVSSASSP). Residues 418-433 (PLGPPPQLPPRAPPSR) are compositionally biased toward pro residues. Residues 434-454 (PGEAAVTAAPASASVSSASSP) show a composition bias toward low complexity. An AF1; mediates transcriptional activation region spans residues 456–547 (STLECILYKA…VYPPYLNYLR (92 aa)). Lysine 532 is covalently cross-linked (Glycyl lysine isopeptide (Lys-Gly) (interchain with G-Cter in SUMO)). 2 consecutive NR C4-type zinc fingers follow at residues 568-588 (CLICGDEASGCHYGVLTCGSC) and 604-628 (CAGRNDCIVDKIRRKNCPACRLRKC). A DNA-binding region (nuclear receptor) is located at residues 568–640 (CLICGDEASG…AGMVLGGRKF (73 aa)). Serine 677 is subject to Phosphoserine. Residues 680-914 (QDIQLIPPLI…EFPEMMSEVI (235 aa)) enclose the NR LBD domain. The tract at residues 688-934 (LIKLLMSIEP…MVKPLLFHKK (247 aa)) is AF2; mediates transcriptional activation. Position 767 (arginine 767) interacts with progesterone.

Belongs to the nuclear hormone receptor family. As to quaternary structure, interacts with SMARD1 and UNC45A. Interacts with CUEDC2; the interaction promotes ubiquitination, decreases sumoylation, and represses transcriptional activity. Interacts with PIAS3; the interaction promotes sumoylation of PR in a hormone-dependent manner, inhibits DNA-binding, and alters nuclear export. Interacts with SP1; the interaction requires ligand-induced phosphorylation on Ser-345 by ERK1/2-MAPK. Interacts with PRMT2. Interacts with NCOA2 and NCOA1. Interacts with KLF9. Interacts with GTF2B. In terms of processing, phosphorylated on multiple serine sites. Several of these sites are hormone-dependent. Phosphorylation on Ser-294 is highly hormone-dependent and modulates ubiquitination and sumoylation on Lys-388. Phosphorylation on Ser-345 also requires induction by hormone. Basal phosphorylation on Ser-81, Ser-162, Ser-190 and Ser-400 is increased in response to progesterone and can be phosphorylated in vitro by the CDK2-A1 complex. Increased levels of phosphorylation on Ser-400 also in the presence of EGF, heregulin, IGF, PMA and FBS. Phosphorylation at this site by CDK2 is ligand-independent, and increases nuclear translocation and transcriptional activity. Phosphorylation at Ser-162 and Ser-294, but not at Ser-190, is impaired during the G(2)/M phase of the cell cycle. Phosphorylation on Ser-345 by ERK1/2 MAPK is required for interaction with SP1. Post-translationally, sumoylation is hormone-dependent and represses transcriptional activity. Sumoylation on all three sites is enhanced by PIAS3. Desumoylated by SENP1. Sumoylation on Lys-388, the main site of sumoylation, is repressed by ubiquitination on the same site, and modulated by phosphorylation at Ser-294. Ubiquitination is hormone-dependent and represses sumoylation on the same site. Promoted by MAPK-mediated phosphorylation on Ser-294. Ubiquitinated by UBR5, leading to its degradation: UBR5 specifically recognizes and binds ligand-bound PGR when it is not associated with coactivators (NCOAs). In presence of NCOAs, the UBR5-degron is not accessible, preventing its ubiquitination and degradation. In terms of processing, palmitoylated by ZDHHC7 and ZDHHC21. Palmitoylation is required for plasma membrane targeting and for rapid intracellular signaling via ERK and AKT kinases and cAMP generation.

Its subcellular location is the nucleus. The protein localises to the cytoplasm. Functionally, the steroid hormones and their receptors are involved in the regulation of eukaryotic gene expression and affect cellular proliferation and differentiation in target tissues. Transcriptional activator of several progesteron-dependent promoters in a variety of cell types. Involved in activation of SRC-dependent MAPK signaling on hormone stimulation. In Colobus guereza (Mantled guereza), this protein is Progesterone receptor (PGR).